The sequence spans 306 residues: Pyridoxal 5'-phosphate synthase subunit PdxS (306 aa).

Asp36 serves as a coordination point for D-ribose 5-phosphate. Lys93 serves as the catalytic Schiff-base intermediate with D-ribose 5-phosphate. Gly165 is a D-ribose 5-phosphate binding site. Residue Arg177 coordinates D-glyceraldehyde 3-phosphate. D-ribose 5-phosphate is bound by residues Gly226 and 247–248 (GS).

The protein belongs to the PdxS/SNZ family. As to quaternary structure, in the presence of PdxT, forms a dodecamer of heterodimers.

It carries out the reaction aldehydo-D-ribose 5-phosphate + D-glyceraldehyde 3-phosphate + L-glutamine = pyridoxal 5'-phosphate + L-glutamate + phosphate + 3 H2O + H(+). Its pathway is cofactor biosynthesis; pyridoxal 5'-phosphate biosynthesis. In terms of biological role, catalyzes the formation of pyridoxal 5'-phosphate from ribose 5-phosphate (RBP), glyceraldehyde 3-phosphate (G3P) and ammonia. The ammonia is provided by the PdxT subunit. Can also use ribulose 5-phosphate and dihydroxyacetone phosphate as substrates, resulting from enzyme-catalyzed isomerization of RBP and G3P, respectively. This is Pyridoxal 5'-phosphate synthase subunit PdxS from Corynebacterium urealyticum (strain ATCC 43042 / DSM 7109).